Here is a 536-residue protein sequence, read N- to C-terminus: Signal peptide peptidase-like 5 (536 aa).

Positions 1 to 29 are cleaved as a signal peptide; the sequence is MSLPPFTCRLLAAAAALYLIGLLCVGADT. The Lumenal segment spans residues 30–186; the sequence is KDVTAPKIPG…VELLLYAPKS (157 aa). The 77-residue stretch at 94 to 170 folds into the PA domain; it reads SNLTSKLSWS…TSSGDALKKS (77 aa). Asn95 and Asn151 each carry an N-linked (GlcNAc...) asparagine glycan. A helical membrane pass occupies residues 187 to 207; it reads PIVDYAVVFLWLMSVGTVFVA. The Cytoplasmic portion of the chain corresponds to 208–243; the sequence is SVWSHVTSPKKNDEQYDELSPKKSSNVDATKGGAEE. A disordered region spans residues 218–238; the sequence is KNDEQYDELSPKKSSNVDATK. A helical transmembrane segment spans residues 244–264; the sequence is ETLDISAMGAVIFVISASTFL. At 265–273 the chain is on the lumenal side; it reads VLLFFFMSS. The chain crosses the membrane as a helical span at residues 274–296; the sequence is WFILILTIFFVIGGMQGMHNINV. Over 297–318 the chain is Cytoplasmic; it reads TLITRRCSKCGQKNLKLPLLGN. Residues 319–339 traverse the membrane as a helical segment; that stretch reads TSILSLVVLLFCFVVAILWFM. Residues 340–344 are Lumenal-facing; the sequence is NRKTS. The chain crosses the membrane as a helical span at residues 345–365; sequence HAWAGQDIFGICMMINVLQVA. At 366–374 the chain is on the cytoplasmic side; that stretch reads RLPNIRVAT. A helical membrane pass occupies residues 375–395; that stretch reads ILLCCAFFYDIFWVFISPLIF. Asp384 is an active-site residue. The Lumenal portion of the chain corresponds to 396 to 428; the sequence is KQSVMIAVARGSKDTGESIPMLLRIPRLSDPWG. Residues 429-449 traverse the membrane as a helical segment; the sequence is GYNMIGFGDILFPGLLICFIF. Residue Asp437 is part of the active site. At 450–463 the chain is on the cytoplasmic side; it reads RFDKENNKGVSNGY. A helical transmembrane segment spans residues 464–484; it reads FPWLMFGYGLGLFLTYLGLYV. Residues 485 to 489 are Lumenal-facing; the sequence is MNGHG. Residues 490 to 510 form a helical membrane-spanning segment; it reads QPALLYLVPCTLGITVILGLV. Positions 491–493 match the PAL motif; the sequence is PAL. Residues 511-536 are Cytoplasmic-facing; that stretch reads RKELRDLWNYGTQQPSAADVNPSPEA.

Belongs to the peptidase A22B family. In terms of processing, glycosylated.

It localises to the endosome membrane. Intramembrane-cleaving aspartic protease (I-CLiP) that cleaves type II membrane signal peptides in the hydrophobic plane of the membrane. The sequence is that of Signal peptide peptidase-like 5 (SPPL5) from Arabidopsis thaliana (Mouse-ear cress).